Consider the following 179-residue polypeptide: Fas apoptotic inhibitory molecule 1 (179 aa).

Thr-2 is modified (N-acetylthreonine).

It belongs to the FAIM1 family.

It localises to the cytoplasm. Its function is as follows. Plays a role as an inducible effector molecule that mediates Fas resistance produced by surface Ig engagement in B cells. The chain is Fas apoptotic inhibitory molecule 1 (FAIM) from Homo sapiens (Human).